The following is a 337-amino-acid chain: Putative carbonic anhydrase-like protein 2 (337 aa).

The first 16 residues, 1-16 (MIPWLLTACIYPCVIG), serve as a signal peptide directing secretion. In terms of domain architecture, Alpha-carbonic anhydrase spans 17 to 274 (PDFWGLLHGD…LNGRLVRTNI (258 aa)). The active site involves Tyr140. A glycan (N-linked (GlcNAc...) asparagine) is linked at Asn188. Residue 212-213 (TF) coordinates substrate.

This sequence belongs to the alpha-carbonic anhydrase family.

Its subcellular location is the secreted. The polypeptide is Putative carbonic anhydrase-like protein 2 (cah-2) (Caenorhabditis elegans).